The primary structure comprises 443 residues: Postreplication repair E3 ubiquitin-protein ligase rad18 (443 aa).

The RING-type zinc finger occupies 30–68 (CQVCKDFFDNPVITSCSHTFCSLCIRRCLSTEGKCPTCR). The segment at 106–157 (GTDDSGDLAAEEPASKKRKIEPNAIVGTDGLPEEGIRTRSQSRGASRQPQAT) is disordered. Polar residues predominate over residues 143–157 (TRSQSRGASRQPQAT). The UBZ4-type zinc-finger motif lies at 175–202 (LVPCPVCGRRMKEEAVFRHLDSCTGTAE). Cys178, Cys181, His193, and Cys197 together coordinate Zn(2+). In terms of domain architecture, SAP spans 239–273 (LKDTVLRKKLKDLGIPNWGPRALLQRRHTEWLNLW). Composition is skewed to polar residues over residues 350-363 (IPNA…TPRS) and 431-443 (PISS…KTPH). The disordered stretch occupies residues 350–443 (IPNASQANSD…SSASTHKTPH (94 aa)).

The protein belongs to the RAD18 family. In terms of assembly, interacts with E2 UBC2, forming a complex with ubiquitin ligase activity.

The protein localises to the nucleus. The enzyme catalyses S-ubiquitinyl-[E2 ubiquitin-conjugating enzyme]-L-cysteine + [acceptor protein]-L-lysine = [E2 ubiquitin-conjugating enzyme]-L-cysteine + N(6)-ubiquitinyl-[acceptor protein]-L-lysine.. It participates in protein modification; protein ubiquitination. In terms of biological role, E3 RING-finger protein, member of the UBC2/RAD6 epistasis group. Associates to the E2 ubiquitin conjugating enzyme UBC2/RAD6 to form the UBC2-RAD18 ubiquitin ligase complex involved in postreplicative repair (PRR) of damaged DNA. The polypeptide is Postreplication repair E3 ubiquitin-protein ligase rad18 (uvsH) (Emericella nidulans (strain FGSC A4 / ATCC 38163 / CBS 112.46 / NRRL 194 / M139) (Aspergillus nidulans)).